The following is a 220-amino-acid chain: MTQDELKQQVAIAAIEYVVPDTFIGVGTGSTANFFIDELAKIKGKIKGAVASSEATAERLKDHGIPVMELNSVDELSVYIDGADEADPKLNLIKGGGGALTREKIVLAVAKQFVCIADDSKKVAVLGKFPLPIEVIPMARSYVAREVVKRFGGEPVLREGFTTDNGNVILDIHGLEITDPVAMETELNGIVGVVTNGLFAARNADIFLCGTANGVETIKA.

Substrate-binding positions include 28 to 31, 81 to 84, and 94 to 97; these read TGST, DGAD, and KGGG. Residue E103 is the Proton acceptor of the active site. K121 provides a ligand contact to substrate.

Belongs to the ribose 5-phosphate isomerase family. Homodimer.

It catalyses the reaction aldehydo-D-ribose 5-phosphate = D-ribulose 5-phosphate. It functions in the pathway carbohydrate degradation; pentose phosphate pathway; D-ribose 5-phosphate from D-ribulose 5-phosphate (non-oxidative stage): step 1/1. Its function is as follows. Catalyzes the reversible conversion of ribose-5-phosphate to ribulose 5-phosphate. This Hydrogenovibrio crunogenus (strain DSM 25203 / XCL-2) (Thiomicrospira crunogena) protein is Ribose-5-phosphate isomerase A.